Consider the following 211-residue polypeptide: Thymidylate kinase (211 aa).

10–17 (GVEGCGKT) lines the ATP pocket.

The protein belongs to the thymidylate kinase family.

The enzyme catalyses dTMP + ATP = dTDP + ADP. Phosphorylation of dTMP to form dTDP in both de novo and salvage pathways of dTTP synthesis. This is Thymidylate kinase from Nostoc sp. (strain PCC 7120 / SAG 25.82 / UTEX 2576).